A 1269-amino-acid polypeptide reads, in one-letter code: Multifunctional 2-oxoglutarate metabolism enzyme (1269 aa).

Residues methionine 1–asparagine 41 form a 2-oxoglutarate dehydrogenase E1, N-terminal part region. Residues arginine 23 to leucine 37 show a composition bias toward basic and acidic residues. Residues arginine 23–asparagine 145 form a disordered region. The linker stretch occupies residues proline 42 to alanine 107. The span at glutamate 43–arginine 58 shows a compositional bias: polar residues. Residues lysine 63–lysine 75 are compositionally biased toward pro residues. A succinyltransferase E2 region spans residues glutamate 108 to serine 378. The active-site Proton acceptor; for succinyltransferase activity is the histidine 357. The tract at residues aspartate 379 to proline 1269 is 2-oxoglutarate dehydrogenase E1, C-terminal part. Arginine 583 provides a ligand contact to thiamine diphosphate. 2-oxoglutarate is bound by residues histidine 622 and serine 647. Thiamine diphosphate is bound by residues serine 647, leucine 649, aspartate 686, alanine 687, alanine 688, and asparagine 719. Aspartate 686 is a binding site for Mg(2+). Residues asparagine 719 and isoleucine 721 each coordinate Mg(2+). Residues aspartate 824 to glutamate 855 are a coiled coil. Histidine 1061 contacts 2-oxoglutarate. Acetyl-CoA-binding residues include threonine 1079, arginine 1095, lysine 1130, serine 1133, glutamine 1183, arginine 1190, and arginine 1191.

It belongs to the 2-oxoacid dehydrogenase family. Kgd subfamily. As to quaternary structure, homodimer. The 2-oxoglutarate dehydrogenase (ODH) complex contains multiple copies of three enzymatic components: 2-oxoglutarate dehydrogenase (E1), dihydrolipoamide succinyltransferase (E2) and lipoamide dehydrogenase (E3). Mg(2+) is required as a cofactor. The cofactor is thiamine diphosphate.

The enzyme catalyses glyoxylate + 2-oxoglutarate + H(+) = 2-hydroxy-3-oxoadipate + CO2. It carries out the reaction 2-oxoglutarate + H(+) = succinate semialdehyde + CO2. It catalyses the reaction N(6)-[(R)-lipoyl]-L-lysyl-[protein] + 2-oxoglutarate + H(+) = N(6)-[(R)-S(8)-succinyldihydrolipoyl]-L-lysyl-[protein] + CO2. The catalysed reaction is N(6)-[(R)-dihydrolipoyl]-L-lysyl-[protein] + succinyl-CoA = N(6)-[(R)-S(8)-succinyldihydrolipoyl]-L-lysyl-[protein] + CoA. Its pathway is carbohydrate metabolism; tricarboxylic acid cycle; succinate from 2-oxoglutarate (transferase route): step 1/2. It functions in the pathway carbohydrate metabolism; tricarboxylic acid cycle; succinyl-CoA from 2-oxoglutarate (dehydrogenase route): step 1/1. Alpha-ketoglutarate dehydrogenase and decarboxylase activities are inhibited by unphosphorylated GarA, and allosterically activated by acetyl-CoA, the main substrate of the TCA cycle. Its function is as follows. Shows three enzymatic activities that share a first common step, the attack of thiamine-PP on 2-oxoglutarate (alpha-ketoglutarate, KG), leading to the formation of an enamine-thiamine-PP intermediate upon decarboxylation. Thus, displays KGD activity, catalyzing the decarboxylation from five-carbon 2-oxoglutarate to four-carbon succinate semialdehyde (SSA). Also catalyzes C-C bond formation between the activated aldehyde formed after decarboxylation of alpha-ketoglutarate and the carbonyl of glyoxylate (GLX), to yield 2-hydroxy-3-oxoadipate (HOA), which spontaneously decarboxylates to form 5-hydroxylevulinate (HLA). And is also a component of the 2-oxoglutarate dehydrogenase (ODH) complex, that catalyzes the overall conversion of 2-oxoglutarate to succinyl-CoA and CO(2). The KG decarboxylase and KG dehydrogenase reactions provide two alternative, tightly regulated, pathways connecting the oxidative and reductive branches of the TCA cycle. The chain is Multifunctional 2-oxoglutarate metabolism enzyme (kgd) from Mycobacterium sp. (strain KMS).